We begin with the raw amino-acid sequence, 155 residues long: Large ribosomal subunit protein eL24 (155 aa).

A compositionally biased stretch (basic and acidic residues) spans Arg-94 to Lys-129. A disordered region spans residues Arg-94–Arg-155.

This sequence belongs to the eukaryotic ribosomal protein eL24 family.

The polypeptide is Large ribosomal subunit protein eL24 (RPL24) (Kluyveromyces lactis (strain ATCC 8585 / CBS 2359 / DSM 70799 / NBRC 1267 / NRRL Y-1140 / WM37) (Yeast)).